A 368-amino-acid polypeptide reads, in one-letter code: Peptide chain release factor 2 (368 aa).

Q250 is subject to N5-methylglutamine.

It belongs to the prokaryotic/mitochondrial release factor family. Methylated by PrmC. Methylation increases the termination efficiency of RF2.

The protein resides in the cytoplasm. In terms of biological role, peptide chain release factor 2 directs the termination of translation in response to the peptide chain termination codons UGA and UAA. In Rickettsia conorii (strain ATCC VR-613 / Malish 7), this protein is Peptide chain release factor 2.